The primary structure comprises 402 residues: Tryptophan synthase beta chain (402 aa).

An N6-(pyridoxal phosphate)lysine modification is found at K91.

This sequence belongs to the TrpB family. Tetramer of two alpha and two beta chains. Pyridoxal 5'-phosphate is required as a cofactor.

The catalysed reaction is (1S,2R)-1-C-(indol-3-yl)glycerol 3-phosphate + L-serine = D-glyceraldehyde 3-phosphate + L-tryptophan + H2O. It functions in the pathway amino-acid biosynthesis; L-tryptophan biosynthesis; L-tryptophan from chorismate: step 5/5. Functionally, the beta subunit is responsible for the synthesis of L-tryptophan from indole and L-serine. The polypeptide is Tryptophan synthase beta chain (Streptococcus thermophilus (strain ATCC BAA-250 / LMG 18311)).